The following is an 86-amino-acid chain: Large ribosomal subunit protein bL31B (86 aa).

The protein belongs to the bacterial ribosomal protein bL31 family. Type B subfamily. Part of the 50S ribosomal subunit.

The chain is Large ribosomal subunit protein bL31B from Vibrio campbellii (strain ATCC BAA-1116).